The primary structure comprises 639 residues: Tubulin--tyrosine ligase-like protein 12 (639 aa).

A TTL domain is found at Pro-295–Ile-639. Residues Ser-445–Ile-448, Lys-463, and Asp-465 contribute to the ATP site.

The protein belongs to the tubulin--tyrosine ligase family. Interacts with MAVS; the interaction prevents MAVS binding to TBK1 and IKBKE. Interacts (via N-terminus) with TBK1 (via protein kinase domain). Interacts (via TTL domain) with IKBKE (via protein kinase domain). Interacts with tubulin alpha. Interacts with histone H3 and histone H4 (when trimethylated at 'Lys-20' (H4K20me3)). Interacts with CBX3. As to expression, widely expressed with highest levels in brain, kidney, liver, lung, muscle and testis.

Its subcellular location is the cytoplasm. The protein resides in the midbody. It localises to the cytoskeleton. The protein localises to the microtubule organizing center. It is found in the centrosome. Its subcellular location is the spindle. The protein resides in the nucleus. Its function is as follows. Negatively regulates post-translational modifications of tubulin, including detyrosination of the C-terminus and polyglutamylation of glutamate residues. Also, indirectly promotes histone H4 trimethylation at 'Lys-20' (H4K20me3). Probably by controlling tubulin and/or histone H4 post-translational modifications, plays a role in mitosis and in maintaining chromosome number stability. During RNA virus-mediated infection, acts as a negative regulator of the RIG-I pathway by preventing MAVS binding to TBK1 and IKBKE. This Mus musculus (Mouse) protein is Tubulin--tyrosine ligase-like protein 12.